A 419-amino-acid chain; its full sequence is Phosphatidylcholine:ceramide cholinephosphotransferase 1 (419 aa).

The SAM domain occupies 13-76; it reads WSPKKVADWL…LDMIETLKME (64 aa). Position 14 is a phosphoserine (serine 14). The next 5 membrane-spanning stretches (helical) occupy residues 142 to 162, 190 to 210, 221 to 241, 282 to 302, and 310 to 330; these read FLAFLYALSCFVLTTVMISVV, FSICEINGMILVGLWLFQWLL, FFCIVGTLYLYRCITMYVTTL, MCGDYLYSGHTVMLTLTYLFI, and LWWYHWICWLLSVVGIFCILL. Residue histidine 291 is part of the active site. Residues 331 to 419 lie on the Cytoplasmic side of the membrane; that stretch reads AHDHYTVDVV…VKYSRLVNDT (89 aa). Catalysis depends on residues histidine 334 and aspartate 338.

This sequence belongs to the sphingomyelin synthase family. In terms of tissue distribution, isoform 1 is widely expressed, isoform 2 shows a more narrow distribution and isoform 3 is detected only in testis and heart.

Its subcellular location is the golgi apparatus membrane. The enzyme catalyses an N-acylsphing-4-enine + a 1,2-diacyl-sn-glycero-3-phosphocholine = a sphingomyelin + a 1,2-diacyl-sn-glycerol. The catalysed reaction is 1-(9Z-octadecenoyl)-2-acyl-sn-3-glycerol + a sphingomyelin = a 1-(9Z-octadecenoyl)-2-acyl-sn-glycero-3-phosphocholine + an N-acylsphing-4-enine. It carries out the reaction N-hexadecanoylsphinganine + a 1,2-diacyl-sn-glycero-3-phosphocholine = N-hexadecanoyl-sphinganine-1-phosphocholine + a 1,2-diacyl-sn-glycerol. It catalyses the reaction N-hexadecanoyl-(4R)-hydroxysphinganine + a 1,2-diacyl-sn-glycero-3-phosphocholine = N-hexadecanoyl-(4R)-hydroxysphinganine-phosphocholine + a 1,2-diacyl-sn-glycerol. The enzyme catalyses an N-acylsphing-4-enine + a 1,2-diacyl-sn-glycero-3-phosphoethanolamine = an N-acylsphing-4-enine 1-phosphoethanolamine + a 1,2-diacyl-sn-glycerol. It functions in the pathway sphingolipid metabolism. Functionally, major sphingomyelin synthase at the Golgi apparatus. Catalyzes the reversible transfer of phosphocholine moiety in sphingomyelin biosynthesis: in the forward reaction transfers phosphocholine head group of phosphatidylcholine (PC) on to ceramide (CER) to form ceramide phosphocholine (sphingomyelin, SM) and diacylglycerol (DAG) as by-product, and in the reverse reaction transfers phosphocholine from SM to DAG to form PC and CER. The direction of the reaction depends on the levels of CER and DAG in Golgi membranes. Converts the newly synthesized CER, that is transported from the endoplasmic reticulum to the trans-Golgi by the Cer transport protein (CERT), to SM. Can form a heteromeric complex with glucosylceramide synthase (GCS) increasing SMS activity and reducing glucosylceramide synthesis, a critical mechanism that controls the metabolic fate of CER in the Golgi. Does not use free phosphorylcholine or CDP-choline as donor. Can also transfer phosphoethanolamine head group of phosphatidylethanolamine (PE) on to CER to form ceramide phosphoethanolamine (CPE). Regulates receptor-mediated signal transduction via mitogenic DAG and proapoptotic CER, as well as via SM, a structural component of membrane rafts that serve as platforms for signal transduction and protein sorting. Plays a role in secretory transport via regulation of DAG pool at the Golgi apparatus and its downstream effects on PRKD1. Its function is as follows. (Microbial infection) Contributes to the brain SM production for Japanese encephalitis virus attachment and infection. This Mus musculus (Mouse) protein is Phosphatidylcholine:ceramide cholinephosphotransferase 1 (Sgms1).